A 92-amino-acid polypeptide reads, in one-letter code: Large ribosomal subunit protein bL25 (92 aa).

This sequence belongs to the bacterial ribosomal protein bL25 family. In terms of assembly, part of the 50S ribosomal subunit; part of the 5S rRNA/L5/L18/L25 subcomplex. Contacts the 5S rRNA. Binds to the 5S rRNA independently of L5 and L18.

Its function is as follows. This is one of the proteins that binds to the 5S RNA in the ribosome where it forms part of the central protuberance. In Vibrio cholerae serotype O1 (strain ATCC 39541 / Classical Ogawa 395 / O395), this protein is Large ribosomal subunit protein bL25.